The chain runs to 342 residues: Arginase 1, mitochondrial (342 aa).

Residues 1 to 22 (MSRIIGRKGINYIHRLNSASFT) constitute a mitochondrion transit peptide. L-ornithine is bound by residues serine 77 and 96–99 (GSTN). Residues histidine 161, aspartate 185, histidine 187, and aspartate 189 each coordinate Mn(2+). Position 189–191 (189–191 (DIY)) interacts with L-ornithine. Substrate is bound at residue 195–197 (EGN). Serine 224 serves as a coordination point for L-ornithine. Positions 270 and 272 each coordinate Mn(2+). Position 313 (glutamate 313) interacts with substrate.

It belongs to the arginase family. As to quaternary structure, forms homohexamers. Mn(2+) is required as a cofactor. As to expression, expressed in vasculature of roots, root tips, cotyledons, leaves, cauline leaves, stems, sepals and pollen.

It is found in the mitochondrion. The catalysed reaction is L-arginine + H2O = urea + L-ornithine. It catalyses the reaction agmatine + H2O = urea + putrescine. Its pathway is nitrogen metabolism; urea cycle; L-ornithine and urea from L-arginine: step 1/1. The protein operates within amine and polyamine biosynthesis; putrescine biosynthesis via agmatine pathway; putrescine from agmatine: step 1/1. Its function is as follows. Catalyzes the hydrolysis of L-arginine to urea and L-ornithine. The latter can be utilized in the urea cycle or as a precursor for the synthesis of both polyamines and proline. Possesses agmatinase activity. Catalyzes the formation of putrescine from agmatine. The protein is Arginase 1, mitochondrial of Arabidopsis thaliana (Mouse-ear cress).